A 430-amino-acid polypeptide reads, in one-letter code: MDDISGRQTLPRINRLLEHVGNPQDSLSILHIAGTNGKETVSKFLTSILQHPGQQRQRVLIGRYTTSSLLNAKEEDISINNEAISLIEYSRIEKELIEADSSLKLQCNNLELLTSVALVYFAKKNCQWCIIETGLAGKQDPGSIIAGQSRVCCAITNVGISDEAFLCKFLSQITESSTNKAIFLLDGSNDEFVRNTITKRCHDVGCPLEITDPSLRDYNVHTDTWGTLEVRLPYSEEEYQIFNLRVAIAVLDFLSKEKKVCISKDQLSQGLISVDWPRSLHRLDYCYESTSGKKIALLLDNANNAKAARNLACHLRTTYGDTPLTFVIAITTGKKVSPLLDPLIRPQDYVIVTRFGSVVGMPWIQSLEPVNLLAFIKNRYTRNVNMQPDLQSVWTFLETSGLKTIVPVIVCGSLYICKELLRLHNCHLPV.

Residue 37 to 40 (GKET) coordinates ATP. Glu132 is a Mg(2+) binding site. Asp300 is a binding site for ATP.

The protein belongs to the folylpolyglutamate synthase family.

It localises to the mitochondrion. It catalyses the reaction (6S)-5,6,7,8-tetrahydrofolyl-(gamma-L-Glu)(n) + L-glutamate + ATP = (6S)-5,6,7,8-tetrahydrofolyl-(gamma-L-Glu)(n+1) + ADP + phosphate + H(+). It participates in cofactor biosynthesis; tetrahydrofolylpolyglutamate biosynthesis. In terms of biological role, conversion of folates to polyglutamate derivatives. The chain is Probable folylpolyglutamate synthase (RMA1) from Saccharomyces cerevisiae (strain ATCC 204508 / S288c) (Baker's yeast).